Reading from the N-terminus, the 117-residue chain is Hainantoxin-XV-5 (117 aa).

The first 20 residues, 1-20 (MKLCAVIIASLLVCVAVASS), serve as a signal peptide directing secretion. A disordered region spans residues 20–55 (SSDNQKEFAQEKEMTREETQSLGEHEKDDEVTGSEE). A propeptide spanning residues 21-56 (SDNQKEFAQEKEMTREETQSLGEHEKDDEVTGSEER) is cleaved from the precursor. Basic and acidic residues predominate over residues 23–55 (NQKEFAQEKEMTREETQSLGEHEKDDEVTGSEE). 4 disulfides stabilise this stretch: C58-C72, C65-C78, C69-C115, and C71-C91.

Belongs to the neurotoxin 03 (Tx2) family. 02 subfamily. HNTX-XV sub-subfamily. Expressed by the venom gland.

It is found in the secreted. Its function is as follows. Putative ion channel inhibitor. In Cyriopagopus hainanus (Chinese bird spider), this protein is Hainantoxin-XV-5.